Reading from the N-terminus, the 267-residue chain is Small ribosomal subunit protein uS3 (267 aa).

The region spanning 38-106 (IRKLLATGME…QVQLNILEVK (69 aa)) is the KH type-2 domain. The tract at residues 215-267 (TAASAPAGDRDRPRRERPSRPRRSGSTGTTATSTEAGRAATAVVEAPAENQEG) is disordered. Positions 222–233 (GDRDRPRRERPS) are enriched in basic and acidic residues. Residues 238–256 (SGSTGTTATSTEAGRAATA) are compositionally biased toward low complexity.

The protein belongs to the universal ribosomal protein uS3 family. In terms of assembly, part of the 30S ribosomal subunit. Forms a tight complex with proteins S10 and S14.

Binds the lower part of the 30S subunit head. Binds mRNA in the 70S ribosome, positioning it for translation. The sequence is that of Small ribosomal subunit protein uS3 from Nocardia farcinica (strain IFM 10152).